Here is a 335-residue protein sequence, read N- to C-terminus: Anthranilate phosphoribosyltransferase (335 aa).

5-phospho-alpha-D-ribose 1-diphosphate-binding positions include Gly79, 82–83 (GD), Thr87, 89–92 (NIST), 107–115 (KHCNQGVSS), and Ser119. Position 79 (Gly79) interacts with anthranilate. Ser91 serves as a coordination point for Mg(2+). Residue Asn110 coordinates anthranilate. Anthranilate is bound at residue Arg165. Mg(2+) contacts are provided by Asp223 and Glu224.

The protein belongs to the anthranilate phosphoribosyltransferase family. As to quaternary structure, homodimer. It depends on Mg(2+) as a cofactor.

The catalysed reaction is N-(5-phospho-beta-D-ribosyl)anthranilate + diphosphate = 5-phospho-alpha-D-ribose 1-diphosphate + anthranilate. It participates in amino-acid biosynthesis; L-tryptophan biosynthesis; L-tryptophan from chorismate: step 2/5. Its function is as follows. Catalyzes the transfer of the phosphoribosyl group of 5-phosphorylribose-1-pyrophosphate (PRPP) to anthranilate to yield N-(5'-phosphoribosyl)-anthranilate (PRA). The sequence is that of Anthranilate phosphoribosyltransferase from Buchnera aphidicola subsp. Diuraphis noxia.